Reading from the N-terminus, the 313-residue chain is Porphobilinogen deaminase (313 aa).

Cys242 is subject to S-(dipyrrolylmethanemethyl)cysteine.

It belongs to the HMBS family. In terms of assembly, monomer. Dipyrromethane serves as cofactor.

It carries out the reaction 4 porphobilinogen + H2O = hydroxymethylbilane + 4 NH4(+). It participates in porphyrin-containing compound metabolism; protoporphyrin-IX biosynthesis; coproporphyrinogen-III from 5-aminolevulinate: step 2/4. Functionally, tetrapolymerization of the monopyrrole PBG into the hydroxymethylbilane pre-uroporphyrinogen in several discrete steps. The sequence is that of Porphobilinogen deaminase from Escherichia coli (strain K12 / MC4100 / BW2952).